Reading from the N-terminus, the 933-residue chain is Dual 3',5'-cyclic-AMP and -GMP phosphodiesterase 11A (933 aa).

Positions His-42–Leu-121 are disordered. Residues Ser-162, Ser-163, and Ser-239 each carry the phosphoserine modification. GAF domains are found at residues Asp-217 to Ile-370 and Asp-402 to Ile-558. 3',5'-cyclic GMP is bound at residue Ser-424. The PDEase domain occupies Ser-588 to Arg-912. The active-site Proton donor is His-664. Residues His-668, His-704, Asp-705, and Asp-816 each coordinate a divalent metal cation. The tract at residues Leu-913–Leu-933 is disordered.

This sequence belongs to the cyclic nucleotide phosphodiesterase family. Requires a divalent metal cation as cofactor. In terms of tissue distribution, expressed in testis and developing spermatoza.

It is found in the cytoplasm. The protein resides in the cytosol. The catalysed reaction is 3',5'-cyclic GMP + H2O = GMP + H(+). It catalyses the reaction 3',5'-cyclic AMP + H2O = AMP + H(+). With respect to regulation, inhibited by 3-isobutyl-1-methylxanthine (IBMX), zaprinast and dipyridamole. cGMP acts as an allosteric activator. Its function is as follows. Plays a role in signal transduction by regulating the intracellular concentration of cyclic nucleotides cAMP and cGMP. Catalyzes the hydrolysis of both cAMP and cGMP to 5'-AMP and 5'-GMP, respectively. This chain is Dual 3',5'-cyclic-AMP and -GMP phosphodiesterase 11A (Pde11a), found in Mus musculus (Mouse).